Reading from the N-terminus, the 87-residue chain is Cell division topological specificity factor (87 aa).

Belongs to the MinE family.

In terms of biological role, prevents the cell division inhibition by proteins MinC and MinD at internal division sites while permitting inhibition at polar sites. This ensures cell division at the proper site by restricting the formation of a division septum at the midpoint of the long axis of the cell. In Chelativorans sp. (strain BNC1), this protein is Cell division topological specificity factor.